The following is a 280-amino-acid chain: Antiactivator FleN (280 aa).

ATP contacts are provided by residues 19–26, E153, N181, 215–217, and R221; these read KGGVGKTN and PYD.

Belongs to the ParA family. As to quaternary structure, forms homodimers. Interacts with FleQ.

ATP-binding allows dimerization and subsequent antagonistic effect against FleQ. ATPase that plays an important role in maintaining flagellar number in Pseudomonas aeruginosa. Exhibits anti-activator activity against FleQ, the global transcriptional regulator of flagellar genes. The polypeptide is Antiactivator FleN (Pseudomonas aeruginosa (strain ATCC 15692 / DSM 22644 / CIP 104116 / JCM 14847 / LMG 12228 / 1C / PRS 101 / PAO1)).